Here is a 439-residue protein sequence, read N- to C-terminus: MSRHFRTHTTSRLTFPSSSGGLAITRLPFSSTSSKLLLQQLSSTSPAAAATAVTITTSSPARNLQRARASAAEQGMEEHGKAAVGWAARDDSGVLSPYNFSRRAQKDDDVTIKVLYCGICHTDLHIVKNDWGNAMYPVVPGHEIVGVVTGVGAGVTKFKAGDTVGVGYFVASCRGCECCGNGYENYCAKMVTTCNGVDHDHGGGAATQGGFSDAIVVNEHYVLRVPAGLPLDSAAPLLCAGVTVYSPMVIHGLNAPGKHVGVVGLGGLGHVAVKFAKAFGMRVTVISTSPGKRQEALEHLGADEFLVSRDAGQMAAAAATMDGILNTVSAWHPIAPLFSLMKPMAQMVFVGGPTRPLELPAYAIVPGGKGITGNCVGGIRDCQAMLDFAGEHGITAEVEVIKMDYVNTAMERLEKNDVRYRFVIDVAGSSLAGSGDAKI.

C120 is a binding site for Zn(2+). T122 contributes to the NADP(+) binding site. Zn(2+) is bound by residues H142, E143, C173, C176, C179, C187, and C239. Residues T243, 264–269, 287–292, T327, G351, and 374–376 contribute to the NADP(+) site; these read GLGGLG, STSPGK, and NCV.

The protein belongs to the zinc-containing alcohol dehydrogenase family. In terms of assembly, homodimer. Zn(2+) serves as cofactor.

The catalysed reaction is (E)-cinnamyl alcohol + NADP(+) = (E)-cinnamaldehyde + NADPH + H(+). It catalyses the reaction (E)-coniferol + NADP(+) = (E)-coniferaldehyde + NADPH + H(+). The enzyme catalyses (E)-sinapyl alcohol + NADP(+) = (E)-sinapaldehyde + NADPH + H(+). It carries out the reaction (E)-4-coumaroyl alcohol + NADP(+) = (E)-4-coumaraldehyde + NADPH + H(+). The catalysed reaction is (E)-caffeyl alcohol + NADP(+) = (E)-caffeyl aldehyde + NADPH + H(+). Its pathway is aromatic compound metabolism; phenylpropanoid biosynthesis. In terms of biological role, involved in lignin biosynthesis. Catalyzes the final step specific for the production of lignin monomers. Catalyzes the NADPH-dependent reduction of coniferaldehyde, 5-hydroxyconiferaldehyde, sinapaldehyde, 4-coumaraldehyde and caffeyl aldehyde to their respective alcohols. This is Probable cinnamyl alcohol dehydrogenase 8C from Oryza sativa subsp. japonica (Rice).